Here is a 235-residue protein sequence, read N- to C-terminus: Serine/arginine-rich splicing factor 7 (235 aa).

The 74-residue stretch at Thr11–Gly84 folds into the RRM domain. Position 24 is an N6-acetyllysine; alternate (Lys24). Residue Lys24 forms a Glycyl lysine isopeptide (Lys-Gly) (interchain with G-Cter in SUMO2); alternate linkage. Ser32 carries the phosphoserine modification. The sufficient for interaction with NXF1 stretch occupies residues Leu81–Arg98. A CCHC-type zinc finger spans residues Asp104–His120. Residues Ser123–Arg180 show a composition bias toward basic residues. The segment at Ser123–Asp235 is disordered. Tandem repeats lie at residues Arg153–Pro160, Arg161–Leu168, Arg169–Leu176, and Arg177–Ile184. Residues Arg153–Gly223 form a 6 X 8 AA repeats of R-R-S-R-S-X-S-X region. Ser163, Ser165, and Ser167 each carry phosphoserine. Residues Ser181, Ser183, Ser189, Ser191, and Ser193 each carry the phosphoserine modification. Residues Ser187–Arg219 are compositionally biased toward basic residues. One copy of the 5; approximate repeat lies at Ser208 to Pro215. A 6; approximate repeat occupies Lys216 to Gly223. 2 positions are modified to phosphoserine: Ser228 and Ser230.

This sequence belongs to the splicing factor SR family. Found in large molecular weight complexes containing CCNL1 and the p110 isoforms of either CDC2L1 or CDC2L2. Interacts with CCNL2 and CPSF6. Interacts with NXF1. Interacts with YTHDC1. Extensively phosphorylated on serine residues in the RS domain.

It localises to the nucleus. The protein localises to the cytoplasm. In terms of biological role, required for pre-mRNA splicing. Represses the splicing of MAPT/Tau exon 10. May function as export adapter involved in mRNA nuclear export such as of histone H2A. Binds mRNA which is thought to be transferred to the NXF1-NXT1 heterodimer for export (TAP/NXF1 pathway); enhances NXF1-NXT1 RNA-binding activity. RNA-binding is semi-sequence specific. This chain is Serine/arginine-rich splicing factor 7 (SRSF7), found in Bos taurus (Bovine).